An 827-amino-acid chain; its full sequence is Lon protease (827 aa).

The interval 1 to 27 is disordered; sequence MNDETLREQTTAESEETSPTTPSPEPE. Residues 32–225 form the Lon N-terminal domain; that stretch reads LPLIPLEGAV…KVLMFYRKQF (194 aa). Residue 385 to 392 coordinates ATP; sequence GPPGVGKT. A Lon proteolytic domain is found at 625 to 806; that stretch reads IDQPGVAIGL…DEVLSIALLP (182 aa). Catalysis depends on residues S712 and K755.

This sequence belongs to the peptidase S16 family. Homohexamer. Organized in a ring with a central cavity.

Its subcellular location is the cytoplasm. It catalyses the reaction Hydrolysis of proteins in presence of ATP.. Functionally, ATP-dependent serine protease that mediates the selective degradation of mutant and abnormal proteins as well as certain short-lived regulatory proteins. Required for cellular homeostasis and for survival from DNA damage and developmental changes induced by stress. Degrades polypeptides processively to yield small peptide fragments that are 5 to 10 amino acids long. Binds to DNA in a double-stranded, site-specific manner. This chain is Lon protease, found in Chloroflexus aurantiacus (strain ATCC 29366 / DSM 635 / J-10-fl).